A 215-amino-acid chain; its full sequence is Uracil phosphoribosyltransferase (215 aa).

5-phospho-alpha-D-ribose 1-diphosphate-binding positions include R84, R109, and 136 to 144 (DPMLATGNT). Uracil-binding positions include I198 and 203–205 (GDA). A 5-phospho-alpha-D-ribose 1-diphosphate-binding site is contributed by D204.

The protein belongs to the UPRTase family. The cofactor is Mg(2+).

It catalyses the reaction UMP + diphosphate = 5-phospho-alpha-D-ribose 1-diphosphate + uracil. Its pathway is pyrimidine metabolism; UMP biosynthesis via salvage pathway; UMP from uracil: step 1/1. Allosterically activated by GTP. In terms of biological role, catalyzes the conversion of uracil and 5-phospho-alpha-D-ribose 1-diphosphate (PRPP) to UMP and diphosphate. The polypeptide is Uracil phosphoribosyltransferase (Methanothermobacter thermautotrophicus (strain ATCC 29096 / DSM 1053 / JCM 10044 / NBRC 100330 / Delta H) (Methanobacterium thermoautotrophicum)).